We begin with the raw amino-acid sequence, 236 residues long: Small ribosomal subunit protein uS2c (236 aa).

It belongs to the universal ribosomal protein uS2 family.

The protein resides in the plastid. It is found in the chloroplast. The sequence is that of Small ribosomal subunit protein uS2c (rps2) from Daucus carota (Wild carrot).